We begin with the raw amino-acid sequence, 333 residues long: Fructose-1,6-bisphosphatase class 1 (333 aa).

Glu92, Asp113, Leu115, and Asp116 together coordinate Mg(2+). Residues 116–119 (DGSS), Asn209, Tyr242, and Lys272 contribute to the substrate site. Glu278 serves as a coordination point for Mg(2+).

It belongs to the FBPase class 1 family. In terms of assembly, homotetramer. Mg(2+) serves as cofactor.

The protein localises to the cytoplasm. The catalysed reaction is beta-D-fructose 1,6-bisphosphate + H2O = beta-D-fructose 6-phosphate + phosphate. It functions in the pathway carbohydrate biosynthesis; Calvin cycle. This is Fructose-1,6-bisphosphatase class 1 from Chlorobium chlorochromatii (strain CaD3).